Consider the following 429-residue polypeptide: Histidinol dehydrogenase (429 aa).

NAD(+) is bound by residues Tyr130, Gln191, and Asn214. Residues Ser237, Gln259, and His262 each coordinate substrate. Gln259 and His262 together coordinate Zn(2+). Catalysis depends on proton acceptor residues Glu327 and His328. His328, Asp361, Glu415, and His420 together coordinate substrate. Position 361 (Asp361) interacts with Zn(2+). A Zn(2+)-binding site is contributed by His420.

Belongs to the histidinol dehydrogenase family. Requires Zn(2+) as cofactor.

It carries out the reaction L-histidinol + 2 NAD(+) + H2O = L-histidine + 2 NADH + 3 H(+). It functions in the pathway amino-acid biosynthesis; L-histidine biosynthesis; L-histidine from 5-phospho-alpha-D-ribose 1-diphosphate: step 9/9. Catalyzes the sequential NAD-dependent oxidations of L-histidinol to L-histidinaldehyde and then to L-histidine. The protein is Histidinol dehydrogenase of Neisseria gonorrhoeae (strain ATCC 700825 / FA 1090).